We begin with the raw amino-acid sequence, 165 residues long: Shikimate kinase (165 aa).

ATP is bound at residue 11–16 (GAGKTT). Thr-15 contributes to the Mg(2+) binding site. The substrate site is built by Asp-33, Arg-57, and Gly-78. Position 116 (Arg-116) interacts with ATP. Arg-134 provides a ligand contact to substrate.

The protein belongs to the shikimate kinase family. Monomer. Mg(2+) serves as cofactor.

The protein localises to the cytoplasm. It catalyses the reaction shikimate + ATP = 3-phosphoshikimate + ADP + H(+). The protein operates within metabolic intermediate biosynthesis; chorismate biosynthesis; chorismate from D-erythrose 4-phosphate and phosphoenolpyruvate: step 5/7. Catalyzes the specific phosphorylation of the 3-hydroxyl group of shikimic acid using ATP as a cosubstrate. This is Shikimate kinase from Bacillus cereus (strain G9842).